The primary structure comprises 663 residues: Alcohol oxidase 2 (663 aa).

Residue 8–38 (DILVLGGGSSGSCIAGRLANLDHSLKVGLIE) participates in FAD binding. Residue H567 is the Proton acceptor of the active site. Residues 661–663 (ARF) carry the Microbody targeting signal motif.

It belongs to the GMC oxidoreductase family. In terms of assembly, homooctamer. FAD serves as cofactor.

The protein resides in the peroxisome matrix. It catalyses the reaction a primary alcohol + O2 = an aldehyde + H2O2. It participates in energy metabolism; methane degradation. Minor isoform of alcohol oxidase, which catalyzes the oxidation of methanol to formaldehyde and hydrogen peroxide, the first step in the methanol utilization pathway of methylotrophic yeasts. This is Alcohol oxidase 2 (AOX2) from Komagataella phaffii (strain ATCC 76273 / CBS 7435 / CECT 11047 / NRRL Y-11430 / Wegner 21-1) (Yeast).